The chain runs to 590 residues: Protein phosphatase PP2A regulatory subunit A (590 aa).

11 HEAT repeats span residues 12–50 (PIAV…TRDE), 89–127 (LLSP…LEQY), 206–244 (FIPL…EIRH), 246–284 (LLQP…IKDE), 285–323 (LIKP…VLEE), 324–362 (IIPV…TTEY), 363–401 (LLPM…LSQS), 402–440 (LLPA…FNEK), 480–518 (IIPK…IEKQ), 519–551 (ILPT…VLAA), and 562–590 (IIPL…QTND).

The protein belongs to the phosphatase 2A regulatory subunit A family. PP2A exists in several trimeric forms, all of which consist of a core composed of a catalytic subunit associated with a 65 kDa (PR65) (Subunit A) and a 55 kDa (PR55) (Subunit B) regulatory subunit.

Its function is as follows. Phosphatase 2A affects a variety of biological processes in the cell such as transcription, cell cycle progression and cellular morphogenesis, and provides an initial identification of critical substrates for this phosphatase. The regulatory subunit may direct the catalytic subunit to distinct, albeit overlapping, subsets of substrates. The chain is Protein phosphatase PP2A regulatory subunit A (paa1) from Schizosaccharomyces pombe (strain 972 / ATCC 24843) (Fission yeast).